A 356-amino-acid polypeptide reads, in one-letter code: Leucoanthocyanidin dioxygenase (356 aa).

Substrate is bound by residues Y142 and K213. Positions 208–307 (LLLQMKINYY…RISWAVFCEP (100 aa)) constitute a Fe2OG dioxygenase domain. 215–217 (NYY) lines the 2-oxoglutarate pocket. A Fe cation-binding site is contributed by H232. T233 provides a ligand contact to substrate. Residues D234 and H288 each coordinate Fe cation. 298–300 (RIS) is a binding site for 2-oxoglutarate. The substrate site is built by E306 and K341.

This sequence belongs to the iron/ascorbate-dependent oxidoreductase family. It depends on L-ascorbate as a cofactor. Fe(2+) is required as a cofactor. In terms of tissue distribution, expressed in young seedlings (at protein level).

It catalyses the reaction a (2R,3S,4S)-leucoanthocyanidin + 2-oxoglutarate + O2 = a 4-H-anthocyanidin with a 3-hydroxy group + succinate + CO2 + 2 H2O. It carries out the reaction (2R,3S,4S)-3,4-leucopelargonidin + 2-oxoglutarate + O2 = (4S)-2,3-dehydroleucopelargonidin + succinate + CO2 + H2O + H(+). The catalysed reaction is (2R,3S,4S)-leucocyanidin + 2-oxoglutarate + O2 = (4S)-2,3-dehydroleucocyanidin + succinate + CO2 + H2O + H(+). It participates in pigment biosynthesis; anthocyanin biosynthesis. Involved in anthocyanin and protoanthocyanidin biosynthesis by catalyzing the oxidation of leucoanthocyanidins into anthocyanidins. Possesses low flavonol synthase activity in vitro towards dihydrokaempferol and dihydroquercetin producing kaempferol and quercitin, respectively. The protein is Leucoanthocyanidin dioxygenase (LDOX) of Arabidopsis thaliana (Mouse-ear cress).